The sequence spans 445 residues: Chromosomal replication initiator protein DnaA (445 aa).

Positions 1-73 (MSTHLTETWE…VNALKLLTSK (73 aa)) are domain I, interacts with DnaA modulators. The tract at residues 73–106 (KKYNIDFIVTTEEKIEKNHNNEKSNIVVNDEMST) is domain II. The interval 107 to 323 (MLNPKYTFDS…GALIRIVAFS (217 aa)) is domain III, AAA+ region. Residues Gly-151, Gly-153, Lys-154, and Thr-155 each contribute to the ATP site. The segment at 324–445 (SLTNKEISVD…NDLNKRINQK (122 aa)) is domain IV, binds dsDNA.

It belongs to the DnaA family. Oligomerizes as a right-handed, spiral filament on DNA at oriC.

It localises to the cytoplasm. Plays an essential role in the initiation and regulation of chromosomal replication. ATP-DnaA binds to the origin of replication (oriC) to initiate formation of the DNA replication initiation complex once per cell cycle. Binds the DnaA box (a 9 base pair repeat at the origin) and separates the double-stranded (ds)DNA. Forms a right-handed helical filament on oriC DNA; dsDNA binds to the exterior of the filament while single-stranded (ss)DNA is stabiized in the filament's interior. The ATP-DnaA-oriC complex binds and stabilizes one strand of the AT-rich DNA unwinding element (DUE), permitting loading of DNA polymerase. After initiation quickly degrades to an ADP-DnaA complex that is not apt for DNA replication. Binds acidic phospholipids. The protein is Chromosomal replication initiator protein DnaA of Clostridium botulinum (strain Loch Maree / Type A3).